Here is a 329-residue protein sequence, read N- to C-terminus: DNA-directed RNA polymerase subunit alpha (329 aa).

Positions 1-234 are alpha N-terminal domain (alpha-NTD); sequence MQGSVTEFLK…EQLDAFVELR (234 aa). The segment at 248-329 is alpha C-terminal domain (alpha-CTD); sequence FDPILLRPVD…WPPASLADDL (82 aa).

The protein belongs to the RNA polymerase alpha chain family. Homodimer. The RNAP catalytic core consists of 2 alpha, 1 beta, 1 beta' and 1 omega subunit. When a sigma factor is associated with the core the holoenzyme is formed, which can initiate transcription.

It carries out the reaction RNA(n) + a ribonucleoside 5'-triphosphate = RNA(n+1) + diphosphate. Functionally, DNA-dependent RNA polymerase catalyzes the transcription of DNA into RNA using the four ribonucleoside triphosphates as substrates. The chain is DNA-directed RNA polymerase subunit alpha from Shewanella putrefaciens (strain CN-32 / ATCC BAA-453).